Here is a 257-residue protein sequence, read N- to C-terminus: MLIVVSPAKTLDYESPVSTSNFTQPELTAHSAELIQVCRTLSSQDVSELMSVSDKIAGLNVARFAQWSETFTLDNARQAIFAFKGDVYTGLEAETLSPQDLDFAQQHLRMLSGLYGVLRPLDLMQPYRLEMGTKLANARGANLYQFWGDIITEKLNQAIEAQGDNVLVNLASNEYFKAVNPKRLNAQIVTPIFKDAKNGQYKIISFFAKKARGMMARYIIENRIKSVKDLEGFNTAGYYFVASESTPTELVFKREEQ.

The protein belongs to the UPF0246 family.

The polypeptide is UPF0246 protein VCM66_2278 (Vibrio cholerae serotype O1 (strain M66-2)).